Reading from the N-terminus, the 291-residue chain is Small ribosomal subunit protein uS3 (291 aa).

A KH type-2 domain is found at 39-110 (IRLEIMKFLK…KISIKIKEVK (72 aa)).

The protein belongs to the universal ribosomal protein uS3 family. Part of the 30S ribosomal subunit. Forms a tight complex with proteins S10 and S14.

Binds the lower part of the 30S subunit head. Binds mRNA in the 70S ribosome, positioning it for translation. In Borreliella afzelii (strain PKo) (Borrelia afzelii), this protein is Small ribosomal subunit protein uS3.